The sequence spans 92 residues: Small ribosomal subunit protein uS19 (92 aa).

Belongs to the universal ribosomal protein uS19 family.

In terms of biological role, protein S19 forms a complex with S13 that binds strongly to the 16S ribosomal RNA. This Bacillus cytotoxicus (strain DSM 22905 / CIP 110041 / 391-98 / NVH 391-98) protein is Small ribosomal subunit protein uS19.